The primary structure comprises 550 residues: Glutamyl-tRNA(Gln) amidotransferase subunit A, mitochondrial (550 aa).

Active-site charge relay system residues include lysine 79 and serine 171. Serine 195 serves as the catalytic Acyl-ester intermediate. The disordered stretch occupies residues 371–390 (EKDENKVDNDNDDDDDVDEN).

It belongs to the amidase family. GatA subfamily. As to quaternary structure, subunit of the heterotrimeric GatCAB amidotransferase (AdT) complex, composed of A, B and C subunits.

It is found in the mitochondrion. The enzyme catalyses L-glutamyl-tRNA(Gln) + L-glutamine + ATP + H2O = L-glutaminyl-tRNA(Gln) + L-glutamate + ADP + phosphate + H(+). Its function is as follows. Allows the formation of correctly charged Gln-tRNA(Gln) through the transamidation of misacylated Glu-tRNA(Gln) in the mitochondria. The reaction takes place in the presence of glutamine and ATP through an activated gamma-phospho-Glu-tRNA(Gln). This is Glutamyl-tRNA(Gln) amidotransferase subunit A, mitochondrial from Dictyostelium discoideum (Social amoeba).